The primary structure comprises 57 residues: UPF0434 protein swp_2279 (57 aa).

It belongs to the UPF0434 family.

The sequence is that of UPF0434 protein swp_2279 from Shewanella piezotolerans (strain WP3 / JCM 13877).